We begin with the raw amino-acid sequence, 245 residues long: Transcriptional activator protein ExpR (245 aa).

The HTH luxR-type domain occupies Arg173–Gln238. The H-T-H motif DNA-binding region spans Tyr197–Gly216.

This sequence belongs to the autoinducer-regulated transcriptional regulatory protein family.

Its function is as follows. Functions as an OHLL responsive transcriptional regulator that acts in virulence (soft rot disease) through the activation of genes for plant tissue macerating enzymes. This chain is Transcriptional activator protein ExpR (expR), found in Pectobacterium parmentieri.